We begin with the raw amino-acid sequence, 602 residues long: MQSERQKYIRNFSIVAHIDHGKSTLADRLIEATGTLTEREMDTQVLDNMDLEKERGITIKSQAVRLIYKRDTGEEYTLNLIDTPGHVDFNYEVSRSLAACEGAILVVDATQGIQAQTLANCYLALDNDLEIVPVINKIDLPSARPEEVKQEIEDVIGIEAEDAPLVSAKTGLNIKDALEAIVNKVPAPDGDEKAPLKALIFDSYYDSYKGVVCHIRVKEGAIKEGTEIKLMNTGKVYEVVEVGVFVPNYMPVDELKAGDVGYVTASIKNVRDARVGDTITEAKRSANEALSGYRPAVPMVFSGIYPVDGAKYEELKEALEKLQVNDAALSFEPETSIALGFGFRCGFLGLLHMDIIQERLEREFNLDIITTAPSVIYKITKTDGTLIELTNPTNMPSPSEIKLMEEPIVKSSIITPSDYVGAVMDLAQNRRGIFKDMQYLDTTRVSLNYEIPLNEIIYDFFDALKSRTRGYASFDYELIGYKDADLVKLDILLNADVVDALSMIVPRERAYAKGRNMAQKLKEIIPRQMFEIPIQAAVGAKIIARETIKAMRKDVLAKCYGGDISRKRKLLEKQKEGKKRMRQVGSVEVPQEAFMAVLKTEE.

A tr-type G domain is found at 7-189 (KYIRNFSIVA…AIVNKVPAPD (183 aa)). GTP-binding positions include 19–24 (DHGKST) and 136–139 (NKID).

It belongs to the TRAFAC class translation factor GTPase superfamily. Classic translation factor GTPase family. LepA subfamily.

The protein resides in the cell membrane. It catalyses the reaction GTP + H2O = GDP + phosphate + H(+). Its function is as follows. Required for accurate and efficient protein synthesis under certain stress conditions. May act as a fidelity factor of the translation reaction, by catalyzing a one-codon backward translocation of tRNAs on improperly translocated ribosomes. Back-translocation proceeds from a post-translocation (POST) complex to a pre-translocation (PRE) complex, thus giving elongation factor G a second chance to translocate the tRNAs correctly. Binds to ribosomes in a GTP-dependent manner. The polypeptide is Elongation factor 4 (Clostridium botulinum (strain ATCC 19397 / Type A)).